The sequence spans 206 residues: Ribosomal RNA small subunit methyltransferase G (206 aa).

Residues Gly73, Leu78, Val124 to Glu125, and Arg139 each bind S-adenosyl-L-methionine.

It belongs to the methyltransferase superfamily. RNA methyltransferase RsmG family.

The protein resides in the cytoplasm. It carries out the reaction guanosine(527) in 16S rRNA + S-adenosyl-L-methionine = N(7)-methylguanosine(527) in 16S rRNA + S-adenosyl-L-homocysteine. In terms of biological role, specifically methylates the N7 position of guanine in position 527 of 16S rRNA. The sequence is that of Ribosomal RNA small subunit methyltransferase G from Yersinia pseudotuberculosis serotype O:1b (strain IP 31758).